Reading from the N-terminus, the 197-residue chain is MNRSRRLALFCLGAPLLLQACASVAPSRSFDGDQAAASQQYTGRFSANYVRYGRDEGVQGSFRWEEQGRNVRLDLVSPLGQTLAVVTATPSGATLDLPNQPPRNAPEVDTLMEEALGFALPVAGMRDWLHGRATQGAPARTTRDEQGRLATLAQNGWTVRYVAWQDAAAQVPRRIDLARDAGSNPLSVRLVIDPRTP.

A signal peptide spans Met1–Ala20. The N-palmitoyl cysteine moiety is linked to residue Cys21. Cys21 is lipidated: S-diacylglycerol cysteine.

Belongs to the LolB family. As to quaternary structure, monomer.

The protein localises to the cell outer membrane. Plays a critical role in the incorporation of lipoproteins in the outer membrane after they are released by the LolA protein. This Cupriavidus necator (strain ATCC 17699 / DSM 428 / KCTC 22496 / NCIMB 10442 / H16 / Stanier 337) (Ralstonia eutropha) protein is Outer-membrane lipoprotein LolB.